Reading from the N-terminus, the 123-residue chain is Large ribosomal subunit protein bL12 (123 aa).

The protein belongs to the bacterial ribosomal protein bL12 family. Homodimer. Part of the ribosomal stalk of the 50S ribosomal subunit. Forms a multimeric L10(L12)X complex, where L10 forms an elongated spine to which 2 to 4 L12 dimers bind in a sequential fashion. Binds GTP-bound translation factors.

Its function is as follows. Forms part of the ribosomal stalk which helps the ribosome interact with GTP-bound translation factors. Is thus essential for accurate translation. The chain is Large ribosomal subunit protein bL12 from Metamycoplasma arthritidis (strain 158L3-1) (Mycoplasma arthritidis).